The following is a 301-amino-acid chain: MEVNGGEGKVEMGSGLYPDWSELTRECLLDIFSRLSQEQRWIGPMLVSKNWMNACYDPTLNTIFDLETRFLSFPESINWWTPEFEDKVDSFLRSVVDRSEGGLTEIRIRHCTERSLSYAAERCPNLEVLWIKNCPNVTDASMEKIAMNCPNLRELDISYSYGITHESLITLGRSCQNLKILKRNLLPRLGPSLPTIVAPLDYLATFPRYGNIEARIIGKYMTQLKHLEIRYSTLTARGLDSVCKGCSNLEYMDLRGCISLTRSDINTNTSGLKNLTEIIKPDFNPPIAVLRVPRPGNPREE.

The F-box domain occupies Pro18–Leu66. LRR repeat units follow at residues Ile108–Asn133, Cys134–Tyr159, Ser160–Leu185, Tyr231–Gly256, and Cys257–Asp282.

The polypeptide is Putative F-box/LRR-repeat protein 19 (FBL19) (Arabidopsis thaliana (Mouse-ear cress)).